Consider the following 130-residue polypeptide: Small ribosomal subunit protein uS11c (130 aa).

Belongs to the universal ribosomal protein uS11 family. As to quaternary structure, part of the 30S ribosomal subunit.

The protein resides in the plastid. Its subcellular location is the chloroplast. This Pyropia yezoensis (Susabi-nori) protein is Small ribosomal subunit protein uS11c.